The following is a 489-amino-acid chain: Glucose-6-phosphate 1-dehydrogenase (489 aa).

NADP(+) contacts are provided by R50 and K151. 4 residues coordinate substrate: H181, K185, E219, and D238. The active-site Proton acceptor is H243. Substrate contacts are provided by K341 and K346.

Belongs to the glucose-6-phosphate dehydrogenase family. Homodimer.

It carries out the reaction D-glucose 6-phosphate + NADP(+) = 6-phospho-D-glucono-1,5-lactone + NADPH + H(+). It participates in carbohydrate degradation; pentose phosphate pathway; D-ribulose 5-phosphate from D-glucose 6-phosphate (oxidative stage): step 1/3. In terms of biological role, catalyzes the oxidation of glucose 6-phosphate to 6-phosphogluconolactone. The chain is Glucose-6-phosphate 1-dehydrogenase from Gluconobacter oxydans (strain 621H) (Gluconobacter suboxydans).